The following is a 57-amino-acid chain: Light-harvesting protein B-808/866 alpha chain (57 aa).

N-formylmethionine is present on M1. The Cytoplasmic segment spans residues 1–10; that stretch reads MQPRSPVRTN. The chain crosses the membrane as a helical span at residues 11 to 30; that stretch reads IVIFTILGFVVALLIHFIVL. Residue H26 coordinates a bacteriochlorophyll. Residues 31–57 are Periplasmic-facing; the sequence is SSPEYNWLSNAEGGALLLSAARALFGI.

The protein belongs to the antenna complex alpha subunit family. As to quaternary structure, the core complex is formed by different alpha and beta chains, binding bacteriochlorophyll molecules, and arranged most probably in tetrameric structures disposed around the reaction center. The non-pigmented gamma chains may constitute additional components.

The protein resides in the cell membrane. Antenna complexes are light-harvesting systems, which transfer the excitation energy to the reaction centers. The polypeptide is Light-harvesting protein B-808/866 alpha chain (puf2A) (Chloroflexus aurantiacus (strain ATCC 29366 / DSM 635 / J-10-fl)).